The sequence spans 274 residues: MKVIKTLSIINFFIFVTFNIKNESKYSNTFINNAYNMSIRRSMAESKPPTGTGASGSAGSGAGASGSAGSGDGAVASARNGANPGADAEGSSSTPATTTTTTTTTTTTTTNDAEASTSTSSENPNHNNAETNPKGKGEVQKSNQANKETQNNSNVQQDSQTKSNVPPTQDADTKSPTAQPEQAENSAPTAEQTESPELQSAPENKGTGQHGHMHGSRNNHPQNTSDSQKECTDGNKENCGAVTSLLSNSSNIASINKFVVLISAKLVLSFAIFI.

The first 20 residues, 1–20 (MKVIKTLSIINFFIFVTFNI), serve as a signal peptide directing secretion. Residues N22 and N36 are each glycosylated (N-linked (GlcNAc...) asparagine). The interval 43–234 (MAESKPPTGT…SDSQKECTDG (192 aa)) is disordered. The polymorphic region stretch occupies residues 44–200 (AESKPPTGTG…EQTESPELQS (157 aa)). 2 consecutive repeat copies span residues 53-62 (GASGSAGSGA) and 63-72 (GASGSAGSGD). The tract at residues 53-72 (GASGSAGSGAGASGSAGSGD) is 2 X 10 AA tandem repeats of G-A-S-G-S-A-G-S-G-[AD]. The segment covering 53 to 72 (GASGSAGSGAGASGSAGSGD) has biased composition (gly residues). Over residues 91 to 121 (SSSTPATTTTTTTTTTTTTTNDAEASTSTSS) the composition is skewed to low complexity. 3 stretches are compositionally biased toward polar residues: residues 122–131 (ENPNHNNAET), 140–167 (QKSNQANKETQNNSNVQQDSQTKSNVPP), and 174–202 (KSPTAQPEQAENSAPTAEQTESPELQSAP). An N-linked (GlcNAc...) asparagine glycan is attached at N151. The N-linked (GlcNAc...) asparagine glycan is linked to N223. C231 and C239 are disulfide-bonded. N248 is a glycosylation site (N-linked (GlcNAc...) asparagine). N248 carries the GPI-anchor amidated asparagine lipid modification. The propeptide at 249 to 274 (SSNIASINKFVVLISAKLVLSFAIFI) is removed in mature form.

The protein localises to the cell membrane. Functionally, may play a role in the merozoite attachment to the erythrocyte. The chain is Merozoite surface protein 2 from Plasmodium falciparum (isolate kf1916).